A 580-amino-acid chain; its full sequence is Proline--tRNA ligase (580 aa).

It belongs to the class-II aminoacyl-tRNA synthetase family. ProS type 1 subfamily. In terms of assembly, homodimer.

The protein localises to the cytoplasm. The catalysed reaction is tRNA(Pro) + L-proline + ATP = L-prolyl-tRNA(Pro) + AMP + diphosphate. Functionally, catalyzes the attachment of proline to tRNA(Pro) in a two-step reaction: proline is first activated by ATP to form Pro-AMP and then transferred to the acceptor end of tRNA(Pro). As ProRS can inadvertently accommodate and process non-cognate amino acids such as alanine and cysteine, to avoid such errors it has two additional distinct editing activities against alanine. One activity is designated as 'pretransfer' editing and involves the tRNA(Pro)-independent hydrolysis of activated Ala-AMP. The other activity is designated 'posttransfer' editing and involves deacylation of mischarged Ala-tRNA(Pro). The misacylated Cys-tRNA(Pro) is not edited by ProRS. In Mycobacteroides abscessus (strain ATCC 19977 / DSM 44196 / CCUG 20993 / CIP 104536 / JCM 13569 / NCTC 13031 / TMC 1543 / L948) (Mycobacterium abscessus), this protein is Proline--tRNA ligase.